We begin with the raw amino-acid sequence, 170 residues long: ATP synthase subunit b (170 aa).

The helical transmembrane segment at 15-37 threads the bilayer; the sequence is FNLFETNILNWAVVVFGLYKFLP.

The protein belongs to the ATPase B chain family. F-type ATPases have 2 components, F(1) - the catalytic core - and F(0) - the membrane proton channel. F(1) has five subunits: alpha(3), beta(3), gamma(1), delta(1), epsilon(1). F(0) has four main subunits: a(1), b(1), b'(1) and c(10-14). The alpha and beta chains form an alternating ring which encloses part of the gamma chain. F(1) is attached to F(0) by a central stalk formed by the gamma and epsilon chains, while a peripheral stalk is formed by the delta, b and b' chains.

The protein localises to the cellular thylakoid membrane. Functionally, f(1)F(0) ATP synthase produces ATP from ADP in the presence of a proton or sodium gradient. F-type ATPases consist of two structural domains, F(1) containing the extramembraneous catalytic core and F(0) containing the membrane proton channel, linked together by a central stalk and a peripheral stalk. During catalysis, ATP synthesis in the catalytic domain of F(1) is coupled via a rotary mechanism of the central stalk subunits to proton translocation. Component of the F(0) channel, it forms part of the peripheral stalk, linking F(1) to F(0). The sequence is that of ATP synthase subunit b from Prochlorococcus marinus (strain MIT 9312).